A 208-amino-acid chain; its full sequence is Small ribosomal subunit protein uS4 (208 aa).

Residues 97 to 160 (TRLDNVCYRM…QKQLRVQEAL (64 aa)) enclose the S4 RNA-binding domain.

This sequence belongs to the universal ribosomal protein uS4 family. In terms of assembly, part of the 30S ribosomal subunit. Contacts protein S5. The interaction surface between S4 and S5 is involved in control of translational fidelity.

One of the primary rRNA binding proteins, it binds directly to 16S rRNA where it nucleates assembly of the body of the 30S subunit. In terms of biological role, with S5 and S12 plays an important role in translational accuracy. This is Small ribosomal subunit protein uS4 from Xanthomonas oryzae pv. oryzae (strain MAFF 311018).